The sequence spans 162 residues: MERILENAMYASRWLLAPIYFGLSLGLLALALKFFQEIIHVLPNVFTLAEADLVLVILSLIDMSLVGGLLVMVMISGYENFVSQLDIDDSKEKLSWLGKMDSSSLKMKVAASIVAISSIHLLRVFMDAQNISTDYLMWYVIIHMTFVVSAFVMGYLDRITKH.

3 helical membrane passes run 15–35 (LLAPIYFGLSLGLLALALKFF), 53–73 (LVLVILSLIDMSLVGGLLVMV), and 136–156 (LMWYVIIHMTFVVSAFVMGYL).

The protein belongs to the UPF0114 family.

Its subcellular location is the cell membrane. This Pseudomonas entomophila (strain L48) protein is UPF0114 protein PSEEN0819.